The following is a 479-amino-acid chain: Anaerobic nitric oxide reductase flavorubredoxin (479 aa).

Residues 30-210 (LRGSSYNSYL…PFSRLVTPKI (181 aa)) form a zinc metallo-hydrolase region. His79, Glu81, Asp83, His147, Asp166, and His227 together coordinate Fe cation. One can recognise a Flavodoxin-like domain in the interval 254-393 (ITIFYDTMSN…LCREHGREIA (140 aa)). FMN is bound by residues 260–264 (TMSNN) and 342–369 (AFGS…EMSL). Positions 423-479 (GPRMQCSVCQWIYDPAKGEPMQDVAPGTPWSEVPDNFLCPECSLGKDVFEELASEAK) constitute a Rubredoxin-like domain. Residues Cys428, Cys431, Cys461, and Cys464 each contribute to the Fe cation site.

This sequence in the N-terminal section; belongs to the zinc metallo-hydrolase group 3 family. In terms of assembly, homotetramer. Fe cation is required as a cofactor. It depends on FMN as a cofactor.

It localises to the cytoplasm. Its pathway is nitrogen metabolism; nitric oxide reduction. Anaerobic nitric oxide reductase; uses NADH to detoxify nitric oxide (NO), protecting several 4Fe-4S NO-sensitive enzymes. Has at least 2 reductase partners, only one of which (NorW, flavorubredoxin reductase) has been identified. NO probably binds to the di-iron center; electrons enter from the reductase at rubredoxin and are transferred sequentially to the FMN center and the di-iron center. Also able to function as an aerobic oxygen reductase. This Escherichia coli (strain K12 / DH10B) protein is Anaerobic nitric oxide reductase flavorubredoxin (norV).